Here is a 335-residue protein sequence, read N- to C-terminus: DNA-directed RNA polymerase subunit alpha (335 aa).

Positions 1–233 (MTAVNDFLTP…QQIAVFVDLE (233 aa)) are alpha N-terminal domain (alpha-NTD). Residues 247–335 (IDPILLRPVD…DDDRLNAKLR (89 aa)) are alpha C-terminal domain (alpha-CTD).

This sequence belongs to the RNA polymerase alpha chain family. As to quaternary structure, homodimer. The RNAP catalytic core consists of 2 alpha, 1 beta, 1 beta' and 1 omega subunit. When a sigma factor is associated with the core the holoenzyme is formed, which can initiate transcription.

It catalyses the reaction RNA(n) + a ribonucleoside 5'-triphosphate = RNA(n+1) + diphosphate. Functionally, DNA-dependent RNA polymerase catalyzes the transcription of DNA into RNA using the four ribonucleoside triphosphates as substrates. This chain is DNA-directed RNA polymerase subunit alpha, found in Alcanivorax borkumensis (strain ATCC 700651 / DSM 11573 / NCIMB 13689 / SK2).